The sequence spans 305 residues: ADP,ATP carrier protein (305 aa).

Solcar repeat units lie at residues 8 to 101 (SNFA…IKAM), 112 to 204 (KWFA…LKPL), and 212 to 298 (NSFL…LQVI). Transmembrane regions (helical) follow at residues 10 to 37 (FAIDFLMGGVSAAVSKTAAAPIERVKLL), 78 to 102 (TANVIRYFPTQALNFAFKDKIKAMF), 110 to 130 (YAKWFAGNLASGGLAGGLSLL), 180 to 201 (FLPSVVGIVVYRGLYFGLYDSL), and 215 to 235 (LASFLLGWAVTTGASTASYPL). ADP contacts are provided by Arg-83 and Lys-95. An ADP-binding site is contributed by Arg-239. The tract at residues 239–244 (RRRMMM) is important for transport activity. Positions 239–244 (RRRMMM) match the Nucleotide carrier signature motif motif. The chain crosses the membrane as a helical span at residues 275–295 (CGANILRGVAGAGVISMYDQL).

It belongs to the mitochondrial carrier (TC 2.A.29) family. Monomer.

Its subcellular location is the mitochondrion inner membrane. The enzyme catalyses ADP(in) + ATP(out) = ADP(out) + ATP(in). Its activity is regulated as follows. The matrix-open state (m-state) is inhibited by the membrane-permeable bongkrekic acid (BKA). The cytoplasmic-open state (c-state) is inhibited by the membrane-impermeable toxic inhibitor carboxyatractyloside (CATR). ADP:ATP antiporter that mediates import of ADP into the mitochondrial matrix for ATP synthesis, and export of ATP out to fuel the cell. Cycles between the cytoplasmic-open state (c-state) and the matrix-open state (m-state): operates by the alternating access mechanism with a single substrate-binding site intermittently exposed to either the cytosolic (c-state) or matrix (m-state) side of the inner mitochondrial membrane. This chain is ADP,ATP carrier protein (AAC), found in Kluyveromyces lactis (strain ATCC 8585 / CBS 2359 / DSM 70799 / NBRC 1267 / NRRL Y-1140 / WM37) (Yeast).